The primary structure comprises 497 residues: Phenylalanine--tRNA ligase alpha subunit (497 aa).

L-phenylalanine is bound by residues Thr329, 372–374, and Tyr412; that span reads QIE. Position 414 (Glu414) interacts with Mg(2+). Phe438 contributes to the L-phenylalanine binding site.

This sequence belongs to the class-II aminoacyl-tRNA synthetase family. Phe-tRNA synthetase alpha subunit type 2 subfamily. In terms of assembly, heterotetramer; dimer of two heterodimers formed by alpha and beta subunits. Requires Mg(2+) as cofactor.

It is found in the cytoplasm. The enzyme catalyses tRNA(Phe) + L-phenylalanine + ATP = L-phenylalanyl-tRNA(Phe) + AMP + diphosphate + H(+). This Danio rerio (Zebrafish) protein is Phenylalanine--tRNA ligase alpha subunit (farsa).